The sequence spans 1291 residues: DNA-directed RNA polymerase subunit beta (1291 aa).

This sequence belongs to the RNA polymerase beta chain family. As to quaternary structure, the RNAP catalytic core consists of 2 alpha, 1 beta, 1 beta' and 1 omega subunit. When a sigma factor is associated with the core the holoenzyme is formed, which can initiate transcription.

The catalysed reaction is RNA(n) + a ribonucleoside 5'-triphosphate = RNA(n+1) + diphosphate. Functionally, DNA-dependent RNA polymerase catalyzes the transcription of DNA into RNA using the four ribonucleoside triphosphates as substrates. This Mycoplasma mycoides subsp. mycoides SC (strain CCUG 32753 / NCTC 10114 / PG1) protein is DNA-directed RNA polymerase subunit beta.